We begin with the raw amino-acid sequence, 245 residues long: 5-oxoprolinase subunit A (245 aa).

This sequence belongs to the LamB/PxpA family. As to quaternary structure, forms a complex composed of PxpA, PxpB and PxpC.

The enzyme catalyses 5-oxo-L-proline + ATP + 2 H2O = L-glutamate + ADP + phosphate + H(+). Functionally, catalyzes the cleavage of 5-oxoproline to form L-glutamate coupled to the hydrolysis of ATP to ADP and inorganic phosphate. This Neisseria meningitidis serogroup A / serotype 4A (strain DSM 15465 / Z2491) protein is 5-oxoprolinase subunit A.